Here is a 350-residue protein sequence, read N- to C-terminus: 3-methylornithine synthase (350 aa).

The Radical SAM core domain occupies 57 to 279; the sequence is NRVFLNCFIY…PKRLIPASLD (223 aa). [4Fe-4S] cluster is bound by residues Cys71 and Cys75. Phe77 serves as a coordination point for S-adenosyl-L-methionine. Position 78 (Cys78) interacts with [4Fe-4S] cluster. (3R)-3-methyl-D-ornithine is bound by residues Asp112, Ser146, and Tyr169. S-adenosyl-L-methionine-binding residues include Glu171, Arg182, and Arg190. Arg235 is a (3R)-3-methyl-D-ornithine binding site. Residues Leu240 and Gln242 each coordinate S-adenosyl-L-methionine. Residues Ser277, Thr298, and Ser299 each coordinate (3R)-3-methyl-D-ornithine.

Belongs to the radical SAM superfamily. PylB family. The cofactor is [4Fe-4S] cluster. It depends on S-adenosyl-L-methionine as a cofactor.

It catalyses the reaction L-lysine = (3R)-3-methyl-D-ornithine. It participates in amino-acid biosynthesis; L-pyrrolysine biosynthesis. Its function is as follows. Catalyzes the isomerization of L-lysine to (3R)-3-methyl-D-ornithine via a radical-based mechanism, a step in the biosynthesis pathway of pyrrolysine. Also catalyzes the reverse reaction in vitro, converting (3R)-3-methyl-D-ornithine into L-lysine. This chain is 3-methylornithine synthase, found in Methanosarcina barkeri (strain Fusaro / DSM 804).